Here is an 892-residue protein sequence, read N- to C-terminus: MTDVTLKALAAERQVSVDRLVQQFADAGIRKSADDSVSAQEKQTLLAHLNREAVSGPDKLTLQRKTRSTLNIPGTGGKSKSVQIEVRKKRTFVKRDPQEAERLAAEEQAQREAEEQARREAEEQAKREAQQKAEREAAEQAKREAAEKAKREAAEKDKVSNQQTDDMTKTAQAEKARRENEAAELKRKAEEEARRKLEEEARRVAEEARRMAEENKWTATPEPVEDTSDYHVTTSQHARQAEDENDREVEGGRGRGRNAKAARPAKKGKHAESKADREEARAAVRGGKGGKRKGSSLQQGFQKPAQAVNRDVVIGETITVGELANKMAVKGSQVIKAMMKLGAMATINQVIDQETAQLVAEEMGHKVILRRENELEEAVMSDRDTGAAAEPRAPVVTIMGHVDHGKTSLLDYIRSTKVASGEAGGITQHIGAYHVETDNGMITFLDTPGHAAFTSMRARGAQATDIVVLVVAADDGVMPQTIEAIQHAKAAGVPVVVAVNKIDKPEADPDRVKNELSQYGILPEEWGGESQFVHVSAKAGTGIDELLDAILLQAEVLELKAVRKGMASGAVIESFLDKGRGPVATVLVREGTLHKGDIVLCGFEYGRVRAMRNELGQEVLEAGPSIPVEILGLSGVPAAGDEVTVVRDEKKAREVALYRQGKFREVKLARQQKSKLENMFANMTEGEVHEVNIVLKADVQGSVEAISDSLLKLSTDEVKVKIIGSGVGGITETDATLAAASNAILVGFNVRADASARKVIESESLDLRYYSVIYNLIDEVKAAMSGMLSPELKQQIIGLAEVRDVFKSPKFGAIAGCMVTEGTIKRHNPIRVLRDNVVIYEGELESLRRFKDDVNEVRNGMECGIGVKNYNDVRVGDMIEVFEIIEIQRTIA.

The segment at 88–305 (KKRTFVKRDP…SLQQGFQKPA (218 aa)) is disordered. Composition is skewed to basic and acidic residues over residues 93-159 (VKRD…KDKV) and 166-216 (DMTK…EENK). Basic residues predominate over residues 254–269 (GRGRNAKAARPAKKGK). The segment covering 270–282 (HAESKADREEARA) has biased composition (basic and acidic residues). Positions 391–560 (PRAPVVTIMG…LLQAEVLELK (170 aa)) constitute a tr-type G domain. Positions 400-407 (GHVDHGKT) are G1. 400-407 (GHVDHGKT) is a binding site for GTP. The interval 425–429 (GITQH) is G2. Residues 446–449 (DTPG) form a G3 region. GTP is bound by residues 446-450 (DTPGH) and 500-503 (NKID). Residues 500–503 (NKID) form a G4 region. The tract at residues 536–538 (SAK) is G5.

This sequence belongs to the TRAFAC class translation factor GTPase superfamily. Classic translation factor GTPase family. IF-2 subfamily.

The protein resides in the cytoplasm. Its function is as follows. One of the essential components for the initiation of protein synthesis. Protects formylmethionyl-tRNA from spontaneous hydrolysis and promotes its binding to the 30S ribosomal subunits. Also involved in the hydrolysis of GTP during the formation of the 70S ribosomal complex. This is Translation initiation factor IF-2 from Salmonella agona (strain SL483).